The chain runs to 526 residues: D-arabinono-1,4-lactone oxidase (526 aa).

Residues 19–193 (YSAKPERYFQ…VSATIRVVPG (175 aa)) form the FAD-binding PCMH-type domain. His-56 is subject to Pros-8alpha-FAD histidine.

This sequence belongs to the oxygen-dependent FAD-linked oxidoreductase family. Monomer. FAD is required as a cofactor. The N-terminus is blocked.

Its subcellular location is the mitochondrion membrane. The catalysed reaction is D-arabinono-1,4-lactone + O2 = dehydro-D-arabinono-1,4-lactone + H2O2 + H(+). The protein operates within cofactor biosynthesis; D-erythroascorbate biosynthesis; dehydro-D-arabinono-1,4-lactone from D-arabinose: step 2/2. Can oxidize L-gulono-1,4-lactone as well as D-arabinono-1,4-lactone and L-galactono-1,4-lactone. The sequence is that of D-arabinono-1,4-lactone oxidase (ALO1) from Saccharomyces cerevisiae (strain ATCC 204508 / S288c) (Baker's yeast).